A 361-amino-acid chain; its full sequence is Protein Csal_2339 (361 aa).

The active-site Proton acceptor is the serine 91. Residues 92 to 93 (GS) and 259 to 260 (GT) contribute to the substrate site.

It belongs to the proline racemase family.

The enzyme catalyses trans-4-hydroxy-L-proline = cis-4-hydroxy-D-proline. Its function is as follows. In vitro, catalyzes the epimerization of trans-4-hydroxy-L-proline (t4LHyp) to cis-4-hydroxy-D-proline (c4DHyp), albeit with very low efficiency. The physiological substrate may be different. Displays neither proline racemase activity nor t3LHyp dehydratase activity. This chain is Protein Csal_2339, found in Chromohalobacter salexigens (strain ATCC BAA-138 / DSM 3043 / CIP 106854 / NCIMB 13768 / 1H11).